The following is a 449-amino-acid chain: Trigger factor (449 aa).

Residues 162–247 form the PPIase FKBP-type domain; it reads GDTVTIDYTG…IHEVKSKELP (86 aa). The span at 427-438 shows a compositional bias: basic residues; that stretch reads AKKATKKSTAKK. The interval 427–449 is disordered; sequence AKKATKKSTAKKSTKEDEKKADK. Residues 439–449 are compositionally biased toward basic and acidic residues; that stretch reads STKEDEKKADK.

This sequence belongs to the FKBP-type PPIase family. Tig subfamily.

The protein localises to the cytoplasm. The enzyme catalyses [protein]-peptidylproline (omega=180) = [protein]-peptidylproline (omega=0). Functionally, involved in protein export. Acts as a chaperone by maintaining the newly synthesized protein in an open conformation. Functions as a peptidyl-prolyl cis-trans isomerase. The sequence is that of Trigger factor from Lactobacillus gasseri (strain ATCC 33323 / DSM 20243 / BCRC 14619 / CIP 102991 / JCM 1131 / KCTC 3163 / NCIMB 11718 / NCTC 13722 / AM63).